The primary structure comprises 370 residues: Zinc finger protein 830 (370 aa).

Disordered stretches follow at residues M1–L21 and H75–H220. The residue at position 2 (A2) is an N-acetylalanine. Positions V16 to S40 form a coiled coil. A C2H2-type zinc finger spans residues C53–H75. The span at Q90 to Q99 shows a compositional bias: polar residues. The segment covering K104 to K115 has biased composition (basic and acidic residues). Over residues D121 to F134 the composition is skewed to polar residues. Over residues D156–G171 the composition is skewed to acidic residues. Positions G172 to S191 are enriched in basic and acidic residues. A compositionally biased stretch (polar residues) spans R196 to P212. S223 is modified (phosphoserine). The stretch at I310–E338 forms a coiled coil. Residues S349 and S360 each carry the phosphoserine modification.

In terms of assembly, component of the XAB2 complex, a multimeric protein complex composed of XAB2, PRPF19, AQR, ZNF830, ISY1, and PPIE; this complex binds preferentially to RNA. Interacts with XAB2. Identified in a pentameric intron-binding (IB) complex composed of AQR, XAB2, ISY1, ZNF830 and PPIE that is incorporated into the spliceosome as a preassembled complex. The IB complex does not contain PRPF19. Phosphorylated in response to DNA damage by the cell cycle checkpoint kinases ATR/ATM.

It is found in the nucleus. Its subcellular location is the chromosome. It localises to the nucleus speckle. In terms of biological role, may play a role in pre-mRNA splicing as component of the spliceosome. Acts as an important regulator of the cell cycle that participates in the maintenance of genome integrity. During cell cycle progression in embryonic fibroblast, prevents replication fork collapse, double-strand break formation and cell cycle checkpoint activation. Controls mitotic cell cycle progression and cell survival in rapidly proliferating intestinal epithelium and embryonic stem cells. During the embryo preimplantation, controls different aspects of M phase. During early oocyte growth, plays a role in oocyte survival by preventing chromosomal breaks formation, activation of TP63 and reduction of transcription. This chain is Zinc finger protein 830, found in Rattus norvegicus (Rat).